We begin with the raw amino-acid sequence, 113 residues long: Outer membrane protein assembly factor BamE (113 aa).

Residues Met1–Gly19 form the signal peptide. The N-palmitoyl cysteine moiety is linked to residue Cys20. The S-diacylglycerol cysteine moiety is linked to residue Cys20.

Belongs to the BamE family. In terms of assembly, part of the Bam complex, which is composed of the outer membrane protein BamA, and four lipoproteins BamB, BamC, BamD and BamE.

The protein resides in the cell outer membrane. In terms of biological role, part of the outer membrane protein assembly complex, which is involved in assembly and insertion of beta-barrel proteins into the outer membrane. This is Outer membrane protein assembly factor BamE from Escherichia coli O6:H1 (strain CFT073 / ATCC 700928 / UPEC).